Reading from the N-terminus, the 418-residue chain is F-box protein At5g03970 (418 aa).

Positions 18–66 constitute an F-box domain; sequence STHEVLNSNDTMCEILILLPPETIYKLILVSKRWLEIIASPCFRHTYLA.

This is F-box protein At5g03970 from Arabidopsis thaliana (Mouse-ear cress).